A 229-amino-acid polypeptide reads, in one-letter code: MPFKKINIAIDGPSGVGKSTIAKQIANKFNYLFINTGSLYRAIAFFCQKNQISITSERKMIKHLPPNFLSLDFEGNVWLQNQNVSNLLRNDLISKNAAIIAQYPQIRKIVTEILQSFQKNHKGIIMEGRDTTYNVMPDADLKIFLWADAETRAKRRLKQNTFLNLETDFQEILKAIEHRDYLDMTRKTNPLKKTVDSIFLDTTNFTRDQIVSQISKLVFRKIGQFSLEI.

12-20 provides a ligand contact to ATP; the sequence is GPSGVGKST.

The protein belongs to the cytidylate kinase family. Type 1 subfamily.

The protein resides in the cytoplasm. It catalyses the reaction CMP + ATP = CDP + ADP. It carries out the reaction dCMP + ATP = dCDP + ADP. The polypeptide is Cytidylate kinase (Mesomycoplasma hyopneumoniae (strain 232) (Mycoplasma hyopneumoniae)).